The following is a 120-amino-acid chain: uncharacterized protein (120 aa).

This is an uncharacterized protein from Archaeoglobus fulgidus (strain ATCC 49558 / DSM 4304 / JCM 9628 / NBRC 100126 / VC-16).